The primary structure comprises 376 residues: Heat-inducible transcription repressor HrcA (376 aa).

It belongs to the HrcA family.

Its function is as follows. Negative regulator of class I heat shock genes (grpE-dnaK-dnaJ and groELS operons). Prevents heat-shock induction of these operons. The protein is Heat-inducible transcription repressor HrcA of Chloroflexus aggregans (strain MD-66 / DSM 9485).